A 117-amino-acid polypeptide reads, in one-letter code: DNA-directed RNA polymerase subunit omega (117 aa).

The protein belongs to the RNA polymerase subunit omega family. The RNAP catalytic core consists of 2 alpha, 1 beta, 1 beta' and 1 omega subunit. When a sigma factor is associated with the core the holoenzyme is formed, which can initiate transcription.

It catalyses the reaction RNA(n) + a ribonucleoside 5'-triphosphate = RNA(n+1) + diphosphate. Its function is as follows. Promotes RNA polymerase assembly. Latches the N- and C-terminal regions of the beta' subunit thereby facilitating its interaction with the beta and alpha subunits. The protein is DNA-directed RNA polymerase subunit omega of Roseobacter denitrificans (strain ATCC 33942 / OCh 114) (Erythrobacter sp. (strain OCh 114)).